We begin with the raw amino-acid sequence, 104 residues long: L-rhamnose mutarotase (104 aa).

Tyr18 contributes to the substrate binding site. Residue His22 is the Proton donor of the active site. Substrate-binding positions include Tyr41 and 76–77 (WW).

The protein belongs to the rhamnose mutarotase family. As to quaternary structure, homodimer.

The protein localises to the cytoplasm. It carries out the reaction alpha-L-rhamnose = beta-L-rhamnose. It functions in the pathway carbohydrate metabolism; L-rhamnose metabolism. Its function is as follows. Involved in the anomeric conversion of L-rhamnose. The sequence is that of L-rhamnose mutarotase from Lachnoclostridium phytofermentans (strain ATCC 700394 / DSM 18823 / ISDg) (Clostridium phytofermentans).